A 409-amino-acid chain; its full sequence is Spermatogenesis-associated protein 2-like protein (409 aa).

Disordered stretches follow at residues 233-257, 270-299, and 313-337; these read EDEG…TSEL, LWGA…PQPE, and RPGD…IPEP.

The protein belongs to the SPATA2 family.

In Bos taurus (Bovine), this protein is Spermatogenesis-associated protein 2-like protein (SPATA2L).